A 104-amino-acid polypeptide reads, in one-letter code: Type VII secretion system extracellular protein B (104 aa).

Belongs to the WXG100 family. In terms of assembly, homodimer. When mixed with EsxA does not form heterodimers. Forms heterodimers with EsxD.

It is found in the secreted. Virulence factor that is important for the establishment of infection in the host. EsxB is required for EsxA synthesis as well as secretion. Mediates together with EsxA the release of S.aureus from the host cell. Also inhibits host cytokine production and thus modulates dendritic cell-mediated immunity. The chain is Type VII secretion system extracellular protein B from Staphylococcus aureus (strain USA300).